The chain runs to 160 residues: Transcriptional repressor NrdR (160 aa).

A zinc finger spans residues 3–34 (CPFCRHADTQVVDSRVSEDGATIRRRRRCPAC). The ATP-cone domain occupies 49–139 (PSVVKKDGSR…VYRRFEDVSE (91 aa)).

The protein belongs to the NrdR family. Zn(2+) is required as a cofactor.

Negatively regulates transcription of bacterial ribonucleotide reductase nrd genes and operons by binding to NrdR-boxes. The polypeptide is Transcriptional repressor NrdR (Paraburkholderia phytofirmans (strain DSM 17436 / LMG 22146 / PsJN) (Burkholderia phytofirmans)).